The following is a 615-amino-acid chain: Chaperone protein HscA homolog (615 aa).

The protein belongs to the heat shock protein 70 family.

Its function is as follows. Chaperone involved in the maturation of iron-sulfur cluster-containing proteins. Has a low intrinsic ATPase activity which is markedly stimulated by HscB. This Aeromonas salmonicida (strain A449) protein is Chaperone protein HscA homolog.